The chain runs to 109 residues: Ig kappa chain V region S211 (109 aa).

Positions 1 to 23 (DVQMTQSPSYLAASPGESVSISC) are framework-1. The complementarity-determining-1 stretch occupies residues 24-35 (KASNKSISNNLA). The segment at 36–50 (WYZZKPGKANKLLIS) is framework-2. The tract at residues 51-57 (SGSTLQS) is complementarity-determining-2. The interval 58-89 (GTPSRFSGSGSDTDFTLTIRSLEFQDFAVYYC) is framework-3. The complementarity-determining-3 stretch occupies residues 90-98 (ZZYNEPYYT). The interval 99 to 108 (FGAGTMLELK) is framework-4.

This chain is Ig kappa chain V region S211, found in Rattus norvegicus (Rat).